We begin with the raw amino-acid sequence, 591 residues long: Aspartate--tRNA ligase (591 aa).

Glu-173 contacts L-aspartate. The segment at 197–200 (QLFK) is aspartate. Residue Arg-219 coordinates L-aspartate. Residues 219–221 (RDE) and Gln-228 contribute to the ATP site. His-448 provides a ligand contact to L-aspartate. Glu-482 contacts ATP. Arg-489 lines the L-aspartate pocket. Position 534–537 (534–537 (GLDR)) interacts with ATP.

Belongs to the class-II aminoacyl-tRNA synthetase family. Type 1 subfamily. Homodimer.

It localises to the cytoplasm. It carries out the reaction tRNA(Asp) + L-aspartate + ATP = L-aspartyl-tRNA(Asp) + AMP + diphosphate. In terms of biological role, catalyzes the attachment of L-aspartate to tRNA(Asp) in a two-step reaction: L-aspartate is first activated by ATP to form Asp-AMP and then transferred to the acceptor end of tRNA(Asp). In Shewanella oneidensis (strain ATCC 700550 / JCM 31522 / CIP 106686 / LMG 19005 / NCIMB 14063 / MR-1), this protein is Aspartate--tRNA ligase.